Here is a 625-residue protein sequence, read N- to C-terminus: Exonuclease mut-7 homolog (625 aa).

Ser-17 carries the phosphoserine modification. The 3'-5' exonuclease domain maps to 410–602 (LIIVNKADEF…IYNTLIERVS (193 aa)).

This sequence belongs to the mut-7 family. Interacts with AGO1; the interaction is not RNA dependent. Mg(2+) is required as a cofactor.

Its function is as follows. Possesses 3'-5' exoribonuclease activity. Required for 3'-end trimming of AGO1-bound miRNAs, in particular multiple-isoform miRNAs, which represents a critical step in miRNA maturation. The sequence is that of Exonuclease mut-7 homolog (Nbr) from Drosophila melanogaster (Fruit fly).